The chain runs to 424 residues: 2,3-bisphosphoglycerate-independent phosphoglycerate mutase (424 aa).

The protein belongs to the BPG-independent phosphoglycerate mutase family. A-PGAM subfamily.

It carries out the reaction (2R)-2-phosphoglycerate = (2R)-3-phosphoglycerate. Its pathway is carbohydrate degradation; glycolysis; pyruvate from D-glyceraldehyde 3-phosphate: step 3/5. Functionally, catalyzes the interconversion of 2-phosphoglycerate and 3-phosphoglycerate. This Aeropyrum pernix (strain ATCC 700893 / DSM 11879 / JCM 9820 / NBRC 100138 / K1) protein is 2,3-bisphosphoglycerate-independent phosphoglycerate mutase.